The sequence spans 366 residues: S-adenosylmethionine synthase 1 (366 aa).

Glu18 is a binding site for K(+). L-methionine is bound by residues Glu31 and Gln74. ATP-binding positions include 142–144 (DGN), 210–213 (SGRF), Asp221, 227–228 (RK), Ala244, Lys248, and Lys252. Residue Asp221 coordinates L-methionine. Residue Lys252 participates in L-methionine binding.

Belongs to the AdoMet synthase family. As to quaternary structure, homotetramer. Mn(2+) is required as a cofactor. Mg(2+) serves as cofactor. It depends on Co(2+) as a cofactor. Requires K(+) as cofactor.

It is found in the cytoplasm. It catalyses the reaction L-methionine + ATP + H2O = S-adenosyl-L-methionine + phosphate + diphosphate. Its pathway is amino-acid biosynthesis; S-adenosyl-L-methionine biosynthesis; S-adenosyl-L-methionine from L-methionine: step 1/1. Functionally, catalyzes the formation of S-adenosylmethionine from methionine and ATP. The reaction comprises two steps that are both catalyzed by the same enzyme: formation of S-adenosylmethionine (AdoMet) and triphosphate, and subsequent hydrolysis of the triphosphate. In Pisum sativum (Garden pea), this protein is S-adenosylmethionine synthase 1 (SAMS1).